Here is a 96-residue protein sequence, read N- to C-terminus: uncharacterized protein (96 aa).

The chain crosses the membrane as a helical span at residues 13–35 (PVVRYVVALLHWLLWRVVVIIAI).

It localises to the membrane. This is an uncharacterized protein from Archaeoglobus fulgidus (strain ATCC 49558 / DSM 4304 / JCM 9628 / NBRC 100126 / VC-16).